We begin with the raw amino-acid sequence, 658 residues long: DNA ligase (658 aa).

NAD(+) is bound by residues 32–36 (DAVYD) and 81–82 (SL). K112 (N6-AMP-lysine intermediate) is an active-site residue. R133, E167, and K306 together coordinate NAD(+). 4 residues coordinate Zn(2+): C400, C403, C416, and C421. In terms of domain architecture, BRCT spans 577 to 658 (ESSSVFNNKT…LKRLKKLDQN (82 aa)).

This sequence belongs to the NAD-dependent DNA ligase family. LigA subfamily. Mg(2+) serves as cofactor. The cofactor is Mn(2+).

The enzyme catalyses NAD(+) + (deoxyribonucleotide)n-3'-hydroxyl + 5'-phospho-(deoxyribonucleotide)m = (deoxyribonucleotide)n+m + AMP + beta-nicotinamide D-nucleotide.. DNA ligase that catalyzes the formation of phosphodiester linkages between 5'-phosphoryl and 3'-hydroxyl groups in double-stranded DNA using NAD as a coenzyme and as the energy source for the reaction. It is essential for DNA replication and repair of damaged DNA. This chain is DNA ligase, found in Helicobacter pylori (strain G27).